A 218-amino-acid chain; its full sequence is Hypoxanthine-guanine phosphoribosyltransferase (218 aa).

Lysine 69 provides a ligand contact to GMP. Lysine 103 is subject to N6-acetyllysine. Lysine 115 is covalently cross-linked (Glycyl lysine isopeptide (Lys-Gly) (interchain with G-Cter in SUMO1); alternate). A Glycyl lysine isopeptide (Lys-Gly) (interchain with G-Cter in SUMO2); alternate cross-link involves residue lysine 115. GMP-binding positions include 134–142, lysine 166, 186–188, and aspartate 194; these read EDIIDTGKT and KFV. Aspartate 138 acts as the Proton acceptor in catalysis. Threonine 142 bears the Phosphothreonine mark. Aspartate 194 is a binding site for Mg(2+).

It belongs to the purine/pyrimidine phosphoribosyltransferase family. In terms of assembly, homotetramer. It depends on Mg(2+) as a cofactor.

Its subcellular location is the cytoplasm. It catalyses the reaction IMP + diphosphate = hypoxanthine + 5-phospho-alpha-D-ribose 1-diphosphate. It carries out the reaction GMP + diphosphate = guanine + 5-phospho-alpha-D-ribose 1-diphosphate. The protein operates within purine metabolism; IMP biosynthesis via salvage pathway; IMP from hypoxanthine: step 1/1. Functionally, converts guanine to guanosine monophosphate, and hypoxanthine to inosine monophosphate. Transfers the 5-phosphoribosyl group from 5-phosphoribosylpyrophosphate onto the purine. Plays a central role in the generation of purine nucleotides through the purine salvage pathway. This chain is Hypoxanthine-guanine phosphoribosyltransferase (Hprt1), found in Rattus norvegicus (Rat).